The following is a 111-amino-acid chain: Cytochrome bo(3) ubiquinol oxidase subunit 4 (111 aa).

The Cytoplasmic portion of the chain corresponds to 1-17; the sequence is MSSAAHDNHGAGHGSLG. A helical membrane pass occupies residues 18–38; that stretch reads SYAIGFVLSVILTAIPFYMVM. The Periplasmic segment spans residues 39 to 46; that stretch reads DGGFSRHA. A helical transmembrane segment spans residues 47-67; that stretch reads TILTMVVLGLVQVVVHLICFL. Topologically, residues 68-80 are cytoplasmic; it reads HMNMSSEGRWNVM. Residues 81 to 101 form a helical membrane-spanning segment; sequence AFIFTVIVILLVVGLSLWIIF. Residues 102 to 111 are Periplasmic-facing; it reads SADMLMMPMP.

It belongs to the cytochrome c oxidase bacterial subunit 4 family. In terms of assembly, heterooctamer of two A chains, two B chains, two C chains and two D chains.

It localises to the cell inner membrane. Cytochrome bo(3) ubiquinol terminal oxidase is the component of the aerobic respiratory chain of E.coli that predominates when cells are grown at high aeration. Has proton pump activity across the membrane in addition to electron transfer, pumping 2 protons/electron. The sequence is that of Cytochrome bo(3) ubiquinol oxidase subunit 4 (cyoD) from Pseudomonas aeruginosa (strain ATCC 15692 / DSM 22644 / CIP 104116 / JCM 14847 / LMG 12228 / 1C / PRS 101 / PAO1).